A 620-amino-acid polypeptide reads, in one-letter code: Probable potassium transport system protein Kup (620 aa).

12 helical membrane passes run leucine 7–isoleucine 27, valine 44–leucine 64, phenylalanine 98–threonine 118, proline 135–phenylalanine 155, leucine 166–isoleucine 186, glycine 201–leucine 221, tryptophan 245–leucine 265, leucine 278–alanine 298, isoleucine 335–phenylalanine 355, leucine 361–tyrosine 381, valine 394–alanine 414, and leucine 417–threonine 437.

This sequence belongs to the HAK/KUP transporter (TC 2.A.72) family.

It localises to the cell inner membrane. It catalyses the reaction K(+)(in) + H(+)(in) = K(+)(out) + H(+)(out). In terms of biological role, transport of potassium into the cell. Likely operates as a K(+):H(+) symporter. The sequence is that of Probable potassium transport system protein Kup from Chlorobium chlorochromatii (strain CaD3).